The sequence spans 328 residues: Integrator complex subunit 12 (328 aa).

Residues 1 to 45 are sufficient for binding to IntS1 and IntS9 and for 3'-end snRNA processing; that stretch reads MAANIAAAAAAAQEVDPVLKKAIKLLHSSNPTSAAELRLLLDEAL. Residues 128 to 185 form a PHD-type zinc finger; that stretch reads DLNCCVCGEMVFTATNRLIECSKCGAMYHQECHKPPITKEEAADDQEQNWQCDTCCNK. Low complexity-rich tracts occupy residues 215–233, 241–264, 274–283, and 292–311; these read KAKS…NSSS, SSST…SSSS, KSTAASSLSA, and SSGT…SKSS. A disordered region spans residues 215 to 328; the sequence is KAKSSVASSR…GSSSKRRSKQ (114 aa).

This sequence belongs to the Integrator subunit 12 family. As to quaternary structure, belongs to the multiprotein complex Integrator, at least composed of IntS1, IntS2, IntS3, IntS4, omd/IntS5, IntS6, defl/IntS7, IntS8, IntS9, IntS10, IntS11, IntS12, asun/IntS13, IntS14 and IntS15. The core complex associates with protein phosphatase 2A subunits mts/PP2A and Pp2A-29B, to form the Integrator-PP2A (INTAC) complex. Within the complex, interacts with IntS1 and IntS9. Interaction with IntS1 is likely to be important for promoting 3'-end processing of snRNAs.

It is found in the nucleus. Functionally, component of the integrator complex, a multiprotein complex that terminates RNA polymerase II (Pol II) transcription in the promoter-proximal region of genes. The integrator complex provides a quality checkpoint during transcription elongation by driving premature transcription termination of transcripts that are unfavorably configured for transcriptional elongation: the complex terminates transcription by (1) catalyzing dephosphorylation of the C-terminal domain (CTD) of Pol II subunit Polr2A/Rbp1 and Spt5, and (2) degrading the exiting nascent RNA transcript via endonuclease activity. The integrator complex is also involved in the 3'-end processing of the U7 snRNA, and also the spliceosomal snRNAs U1, U2, U4 and U5. Required for the normal expression of the Integrator complex component IntS1. This is Integrator complex subunit 12 from Drosophila melanogaster (Fruit fly).